The following is a 717-amino-acid chain: MTSQPLRLAEEYGPSPGESELAVNPFDGLPFSSRYYELLKQRQALPIWAARFTFLEQLESNPTGVVLVSGEPGSGKSTQIPQWCAEFALARGFQKGQVTVTQPYPLAARSLALRVADEMDLTLGHEVGYSIPQEDCTGPNTLLRFCWDRLLLQEVASTRGTGAWGVLVLDEAQERSVASDSLQGLLQDARLEKLPGDLRVVVVTDPALEPKLRAFWGNPPIVHIPREPGERPSPIYWDTIPPDRVEAACQAVLELCRKELPGDVLVFLPSEEEISLCCESLSREVESLLLQGLPPRVLPLHPDCGRAVQAVYEDMDARKVVVTHWLADFSFSLPSIQHVIDSGLELRSVYNPRIRAEFQVLRPISKCQAEARRLRARGFPPGSCLCLYPKSFLELEAPPLPQPRVCEENLSSLVLLLKRRQIAEPGECHFLDQPAPEALMQALEDLDYLAALDDDGDLSDLGVILSEFPLAPELAKALLASCEFDCVDEMLTLAAMLTAAPGFTRPPLSAEEAALRRALEHTDGDHSSLIQVYEAFIQSGADEAWCQARGLNWAALCQAHKLRGELLELMQRIELPLSLPAFGSEQNRRDLQKALVSGYFLKVARDTDGTGNYLLLTHKHVAQLSSYCCYRSRRAPARPPPWVLYHNFTISKDNCLSIVSEIQPQMLVELAPPYFLSNLPPSESRDLLNQLREGMADSTAGSKSSSAQEFRDPCVLQ.

A Helicase ATP-binding domain is found at 57–225 (QLESNPTGVV…WGNPPIVHIP (169 aa)). An ATP-binding site is contributed by 70 to 77 (GEPGSGKS). The DEAQ box signature appears at 170 to 173 (DEAQ). The 200-residue stretch at 248 to 447 (ACQAVLELCR…ALMQALEDLD (200 aa)) folds into the Helicase C-terminal domain. A disordered region spans residues 694–717 (GMADSTAGSKSSSAQEFRDPCVLQ). Over residues 699–708 (TAGSKSSSAQ) the composition is skewed to polar residues.

The protein resides in the nucleus. Its function is as follows. Might be involved in RNA metabolism; it is missing helicase motif III and may not have helicase activity. The polypeptide is ATP-dependent RNA helicase homolog DQX1 (DQX1) (Homo sapiens (Human)).